Here is a 310-residue protein sequence, read N- to C-terminus: 2-phospho-L-lactate transferase (310 aa).

7,8-didemethyl-8-hydroxy-5-deazariboflavin is bound by residues Asp50 and Arg89.

This sequence belongs to the CofD family. In terms of assembly, homodimer. Requires Mg(2+) as cofactor.

The catalysed reaction is (2S)-lactyl-2-diphospho-5'-guanosine + 7,8-didemethyl-8-hydroxy-5-deazariboflavin = oxidized coenzyme F420-0 + GMP + H(+). The protein operates within cofactor biosynthesis; coenzyme F420 biosynthesis. In terms of biological role, catalyzes the transfer of the 2-phospholactate moiety from (2S)-lactyl-2-diphospho-5'-guanosine to 7,8-didemethyl-8-hydroxy-5-deazariboflavin (FO) with the formation of oxidized coenzyme F420-0 and GMP. The chain is 2-phospho-L-lactate transferase from Methanopyrus kandleri (strain AV19 / DSM 6324 / JCM 9639 / NBRC 100938).